The chain runs to 173 residues: Gamma-crystallin S-2 (173 aa).

2 Beta/gamma crystallin 'Greek key' domains span residues Gly2–Ser40 and Asp41–Thr83. The segment at His84 to Pro88 is connecting peptide. Beta/gamma crystallin 'Greek key' domains are found at residues Tyr89 to Gly129 and Ala130 to Met172.

Belongs to the beta/gamma-crystallin family.

Its function is as follows. Crystallins are the dominant structural components of the vertebrate eye lens. The polypeptide is Gamma-crystallin S-2 (GS-2) (Chiloscyllium indicum (Slender bamboo shark)).